We begin with the raw amino-acid sequence, 201 residues long: Inner membrane protein YnbA (201 aa).

The Periplasmic segment spans residues 1-43 (MTLYQIKPLFQSLLRPTMFWLYKHHVTANHITLAALALSLLTG). A helical membrane pass occupies residues 44-64 (LLLMLAAQPILFLLLPIVLFI). The Cytoplasmic segment spans residues 65 to 84 (RMALNALDGMLARECNQQTR). A helical membrane pass occupies residues 85–107 (LGAILNETGDVISDIALYLPFLF). At 108–116 (LPESNASLV) the chain is on the periplasmic side. A helical membrane pass occupies residues 117-139 (ILMLFCTILTEFCGLLAQTINGV). The Cytoplasmic segment spans residues 140-151 (RSYAGPFGKSDR). The helical transmembrane segment at 152–172 (ALIFGLWGLAVAIYPQWMQWN) threads the bilayer. Residues 173-175 (NLL) lie on the Periplasmic side of the membrane. A helical membrane pass occupies residues 176 to 196 (WSIASILLLWTAINRCRSVLL). Over 197–201 (MSAEI) the chain is Cytoplasmic.

The protein localises to the cell inner membrane. In Escherichia coli (strain K12), this protein is Inner membrane protein YnbA (ynbA).